We begin with the raw amino-acid sequence, 520 residues long: Laccase (520 aa).

Positions 1 to 21 (MHTFLRSTALVVAGLSARALA) are cleaved as a signal peptide. 2 Plastocyanin-like domains span residues 22–148 (SIGP…FVVY) and 160–304 (VDDD…ILRY). Residue Asn-75 is glycosylated (N-linked (GlcNAc...) asparagine). Cu cation is bound by residues His-85, His-87, His-130, and His-132. Intrachain disulfides connect Cys-106–Cys-509 and Cys-138–Cys-227. N-linked (GlcNAc...) asparagine glycosylation is found at Asn-352 and Asn-402. In terms of domain architecture, Plastocyanin-like 3 spans 373 to 496 (TVPVLLQILS…VFAEDIPDVA (124 aa)). Cu cation-binding residues include His-418, His-421, His-423, His-473, Cys-474, His-475, and His-479.

This sequence belongs to the multicopper oxidase family. Requires Cu cation as cofactor.

The protein resides in the secreted. It catalyses the reaction 4 hydroquinone + O2 = 4 benzosemiquinone + 2 H2O. In terms of biological role, lignin degradation and detoxification of lignin-derived products. This chain is Laccase (LAC), found in Phlebia radiata (White-rot fungus).